The sequence spans 241 residues: Protein unc-119 homolog B-B (241 aa).

The interval 1 to 46 (MSGSNREAALAGQPKDERKKSGGGVINRLKARRVQGKESGTSDQSS) is disordered. Tyr-132 lines the tetradecanoate pocket.

It belongs to the PDE6D/unc-119 family.

The protein resides in the cell projection. It localises to the cilium. Myristoyl-binding protein that acts as a cargo adapter: specifically binds the myristoyl moiety of a subset of N-terminally myristoylated proteins and is required for their localization. Plays a key role in localization of proteins to the primary cilium membrane. This Xenopus laevis (African clawed frog) protein is Protein unc-119 homolog B-B (unc119b-b).